We begin with the raw amino-acid sequence, 489 residues long: Glycogen synthase (489 aa).

Lys-15 is a binding site for ADP-alpha-D-glucose.

Belongs to the glycosyltransferase 1 family. Bacterial/plant glycogen synthase subfamily.

The enzyme catalyses [(1-&gt;4)-alpha-D-glucosyl](n) + ADP-alpha-D-glucose = [(1-&gt;4)-alpha-D-glucosyl](n+1) + ADP + H(+). It functions in the pathway glycan biosynthesis; glycogen biosynthesis. Its function is as follows. Synthesizes alpha-1,4-glucan chains using ADP-glucose. This Francisella tularensis subsp. novicida (strain U112) protein is Glycogen synthase.